The primary structure comprises 164 residues: Thiol peroxidase (164 aa).

The Thioredoxin domain occupies 16-162 (LQVGDIAKDF…YEAAINAAKI (147 aa)). Cysteine 58 functions as the Cysteine sulfenic acid (-SOH) intermediate in the catalytic mechanism. Residues cysteine 58 and cysteine 92 are joined by a disulfide bond.

The protein belongs to the peroxiredoxin family. Tpx subfamily. In terms of assembly, homodimer.

The catalysed reaction is a hydroperoxide + [thioredoxin]-dithiol = an alcohol + [thioredoxin]-disulfide + H2O. Thiol-specific peroxidase that catalyzes the reduction of hydrogen peroxide and organic hydroperoxides to water and alcohols, respectively. Plays a role in cell protection against oxidative stress by detoxifying peroxides. The protein is Thiol peroxidase of Streptococcus agalactiae serotype III (strain NEM316).